Reading from the N-terminus, the 270-residue chain is Monofunctional glycosyltransferase (270 aa).

Residues 1 to 35 (MKRSDRYKTYNKPNDSNDSNQLHHNTYFKPVNKPQ) are disordered. Over residues 11–24 (NKPNDSNDSNQLHH) the composition is skewed to polar residues. The chain crosses the membrane as a helical span at residues 47–67 (LLIPILIIIGIIIGVMYALSL).

The protein belongs to the glycosyltransferase 51 family.

The protein resides in the cell membrane. It carries out the reaction [GlcNAc-(1-&gt;4)-Mur2Ac(oyl-L-Ala-gamma-D-Glu-L-Lys-D-Ala-D-Ala)](n)-di-trans,octa-cis-undecaprenyl diphosphate + beta-D-GlcNAc-(1-&gt;4)-Mur2Ac(oyl-L-Ala-gamma-D-Glu-L-Lys-D-Ala-D-Ala)-di-trans,octa-cis-undecaprenyl diphosphate = [GlcNAc-(1-&gt;4)-Mur2Ac(oyl-L-Ala-gamma-D-Glu-L-Lys-D-Ala-D-Ala)](n+1)-di-trans,octa-cis-undecaprenyl diphosphate + di-trans,octa-cis-undecaprenyl diphosphate + H(+). It participates in cell wall biogenesis; peptidoglycan biosynthesis. Peptidoglycan polymerase that catalyzes glycan chain elongation using lipid-linked disaccharide-pentapeptide as the substrate. The protein is Monofunctional glycosyltransferase of Staphylococcus saprophyticus subsp. saprophyticus (strain ATCC 15305 / DSM 20229 / NCIMB 8711 / NCTC 7292 / S-41).